A 378-amino-acid chain; its full sequence is MEEVSSHVKSGKPVMILDSEKSAICIPAEVVSGEILNFMMKNCDEIRLALTWKQILNLGLNRFRFQNGNLIPIDPNLEKISAEERAKFIRELVSGNAGDIKYPGRIFVEETKEMGVLERPGIAEACVDLARMAGFAPSAVYAPLMTAEGGVAGEDYALKFAKEHSMPVFRIKDMIEFRIKSEKIVERVIEATLPTKFYGTFRAVGYKTPLGEIVALVKGRVDEGDVLVRIHSECLTGDVFHSLRCDCGDQLENALKMIDREGKGVAIYMRGHEGRGIGLINKLMAYKLQEEGKDTVDANIELGFPPDMRSYGIAAQILMDLKVKSIRLLTNNPLKIEELKKYGFKIVREPIEVEPCEVNLPYLKAKKDKMGHLICFND.

A DHBP synthase-like region spans residues 1 to 180; the sequence is MEEVSSHVKS…IKDMIEFRIK (180 aa). A GTP cyclohydrolase II region spans residues 181-378; sequence SEKIVERVIE…KMGHLICFND (198 aa). 229-233 lines the GTP pocket; that stretch reads RIHSE. C234, C245, and C247 together coordinate Zn(2+). GTP-binding positions include Q250, 273 to 275, and T295; that span reads EGR. D307 functions as the Proton acceptor in the catalytic mechanism. Catalysis depends on R309, which acts as the Nucleophile. 2 residues coordinate GTP: T330 and K335.

In the N-terminal section; belongs to the DHBP synthase family. This sequence in the C-terminal section; belongs to the GTP cyclohydrolase II family. It depends on Zn(2+) as a cofactor.

It carries out the reaction GTP + 4 H2O = 2,5-diamino-6-hydroxy-4-(5-phosphoribosylamino)-pyrimidine + formate + 2 phosphate + 3 H(+). The protein operates within cofactor biosynthesis; riboflavin biosynthesis; 5-amino-6-(D-ribitylamino)uracil from GTP: step 1/4. Its function is as follows. Catalyzes the conversion of GTP to 2,5-diamino-6-ribosylamino-4(3H)-pyrimidinone 5'-phosphate (DARP), formate and pyrophosphate. The polypeptide is GTP cyclohydrolase-2 (ribA) (Archaeoglobus fulgidus (strain ATCC 49558 / DSM 4304 / JCM 9628 / NBRC 100126 / VC-16)).